A 580-amino-acid chain; its full sequence is Zinc finger protein 271 (580 aa).

C2H2-type zinc fingers lie at residues tyrosine 78–histidine 100, tyrosine 104–histidine 126, tyrosine 132–histidine 154, tyrosine 160–histidine 182, tyrosine 188–histidine 210, tyrosine 216–histidine 238, tyrosine 244–histidine 266, tyrosine 272–histidine 294, tyrosine 300–histidine 322, tyrosine 328–histidine 350, tyrosine 356–histidine 378, tyrosine 384–histidine 406, tyrosine 412–histidine 434, tyrosine 440–histidine 462, tyrosine 468–histidine 490, tyrosine 496–histidine 518, tyrosine 524–histidine 545, and tyrosine 551–histidine 573.

This sequence belongs to the krueppel C2H2-type zinc-finger protein family. In terms of tissue distribution, selectively expressed in adult testis.

Its subcellular location is the nucleus. Functionally, may act to control gene activity during the pachytene stage of meiotic prophase. May function as a transcription activator. In Mus musculus (Mouse), this protein is Zinc finger protein 271 (Znf271).